Consider the following 251-residue polypeptide: MYILISNDDGYQAEGILKLAERLGTVARVTVMAPERDRSGASNSLTLEDPIRVHPIEPDRFRVQGTPTDCVHLALTGLLEEDPDMVFSGINAGANLGDDVLYSGTVAAAMEGRYLGLPAVAISLAGTWAPVHYDTAARVAVKLLEQIQDDPLPPDSILNVNVPDLPWDEIQGFHATRLGCRHRAEPVIKQHDPRGRTIYWVGPPGSEQDAGPGTDFYAVRNGFVSVTPIQVDLTRHAGLEQVRGWLDGVTW.

4 residues coordinate a divalent metal cation: Asp8, Asp9, Ser39, and Asn91.

Belongs to the SurE nucleotidase family. A divalent metal cation is required as a cofactor.

The protein resides in the cytoplasm. It carries out the reaction a ribonucleoside 5'-phosphate + H2O = a ribonucleoside + phosphate. Functionally, nucleotidase that shows phosphatase activity on nucleoside 5'-monophosphates. The chain is 5'-nucleotidase SurE from Halorhodospira halophila (strain DSM 244 / SL1) (Ectothiorhodospira halophila (strain DSM 244 / SL1)).